Here is a 266-residue protein sequence, read N- to C-terminus: Apolipoprotein A-I (266 aa).

The signal sequence occupies residues 1 to 18; it reads MKAVVLTLAVLFLTGSQA. 2 consecutive repeat copies span residues 67-88 and 89-110. Residues 67-266 form a 10 X approximate tandem repeats region; it reads LKLLDNWDTL…DEATKKLNAQ (200 aa). M109 is subject to Methionine sulfoxide. The 3; half-length repeat unit spans residues 111 to 121; that stretch reads KDLEEVKQKVQ. 5 tandem repeats follow at residues 122–143, 144–165, 166–187, 188–209, and 210–231. A 9; half-length repeat occupies 232-242; it reads PALEDLRQGLL. Repeat 10 spans residues 243–266; sequence PVLESFKVGLMAIVDEATKKLNAQ.

The protein belongs to the apolipoprotein A1/A4/E family. As to quaternary structure, homodimer. Interacts with APOA1BP and CLU. Component of a sperm activating protein complex (SPAP), consisting of APOA1, an immunoglobulin heavy chain, an immunoglobulin light chain and albumin. Interacts with NDRG1. Interacts with SCGB3A2. Interacts with NAXE and YJEFN3. Post-translationally, glycosylated. Palmitoylated. In terms of processing, phosphorylation sites are present in the extracellular medium.

It is found in the secreted. Its function is as follows. Participates in the reverse transport of cholesterol from tissues to the liver for excretion by promoting cholesterol efflux from tissues and by acting as a cofactor for the lecithin cholesterol acyltransferase (LCAT). As part of the SPAP complex, activates spermatozoa motility. The sequence is that of Apolipoprotein A-I (APOA1) from Acinonyx jubatus (Cheetah).